Reading from the N-terminus, the 419-residue chain is Multifunctional CCA protein (419 aa).

Residues G8 and R11 each contribute to the ATP site. The CTP site is built by G8 and R11. The Mg(2+) site is built by D21 and D23. Residues R91, R149, and R152 each contribute to the ATP site. Positions 91, 149, and 152 each coordinate CTP. An HD domain is found at C238–F339.

Belongs to the tRNA nucleotidyltransferase/poly(A) polymerase family. Bacterial CCA-adding enzyme type 1 subfamily. As to quaternary structure, monomer. Can also form homodimers and oligomers. It depends on Mg(2+) as a cofactor. Ni(2+) serves as cofactor.

The catalysed reaction is a tRNA precursor + 2 CTP + ATP = a tRNA with a 3' CCA end + 3 diphosphate. The enzyme catalyses a tRNA with a 3' CCA end + 2 CTP + ATP = a tRNA with a 3' CCACCA end + 3 diphosphate. Functionally, catalyzes the addition and repair of the essential 3'-terminal CCA sequence in tRNAs without using a nucleic acid template. Adds these three nucleotides in the order of C, C, and A to the tRNA nucleotide-73, using CTP and ATP as substrates and producing inorganic pyrophosphate. tRNA 3'-terminal CCA addition is required both for tRNA processing and repair. Also involved in tRNA surveillance by mediating tandem CCA addition to generate a CCACCA at the 3' terminus of unstable tRNAs. While stable tRNAs receive only 3'-terminal CCA, unstable tRNAs are marked with CCACCA and rapidly degraded. The protein is Multifunctional CCA protein of Variovorax paradoxus (strain S110).